Here is a 437-residue protein sequence, read N- to C-terminus: Sperm-associated antigen 4 protein (437 aa).

The span at 1–12 (MRRSSRPGSASS) shows a compositional bias: low complexity. Residues 1-88 (MRRSSRPGSA…KPAPRSHNWQ (88 aa)) are disordered. Composition is skewed to polar residues over residues 19 to 31 (NFFSENSSMSITS) and 72 to 88 (WAGSSQQKPAPRSHNWQ). Transmembrane regions (helical) follow at residues 135–155 (FLSLLFQGLSVLLSLAGDVLV) and 166–186 (FLFTAVSLLSLFLSAFWLGLL). A coiled-coil region spans residues 197-244 (KEMLTLSEYHERVRSQGQQLQQLQAELDKLHKEVSTVRAANSERVAKL). One can recognise an SUN domain in the interval 265 to 425 (GASIDLQKTS…YRVRAHGVRT (161 aa)).

In terms of assembly, homodimer. Interacts with ODF1. May associate with microtubules. Interacts with SUN3 and SYNE1; suggesting the formation of a spermatogenesis-specific LINC complex; a SUN domain-based heterotrimer with SUN3 may associate with SYNE1. Interacts with SEPT12 and LMNB1; during spermatogenesis. As to expression, predominantly epressed in testis. Expressed in ejaculated spermatozoa (at protein level).

The protein localises to the membrane. It is found in the cytoplasm. Its subcellular location is the cytoskeleton. The protein resides in the flagellum axoneme. It localises to the nucleus envelope. The protein localises to the nucleus inner membrane. Its function is as follows. Involved in spermatogenesis. Required for sperm head formation but not required to establish and maintain general polarity of the sperm head. Required for anchoring and organization of the manchette. Required for targeting of SUN3 and probably SYNE1 through a probable SUN1:SYNE3 LINC complex to the nuclear envelope and involved in accurate posterior sperm head localization of the complex. May anchor SUN3 the nuclear envelope. Involved in maintenance of the nuclear envelope integrity. May assist the organization and assembly of outer dense fibers (ODFs), a specific structure of the sperm tail. The sequence is that of Sperm-associated antigen 4 protein (SPAG4) from Homo sapiens (Human).